The chain runs to 580 residues: MKVVLVSGGVISGVGKGIIASSAGLLLKTLGLRVTAIKTDPYINTDAGLLNPLEHGECFVLDDGGETDLDLGNYERYLGIQLSRDSNITTGKIYKQVIEKERRGDYLGKTVQVVPHITDAIQDWIERVAKIPVDASGEAPDVCIIELGGTIGDLESGPFVEALSQLRHRLGRDNFLSISVSYVPIINGEEKTKPTQHAIRQVRSAGLIPDVIACRCERELDQATITKIARSCQVEDEQVIGVRNMDTIYQVPLLLEQEGLLKLLQKGLALDKCQVTPPMAQKGQALWDLWKKTVVPDRHLEPVNIILVGKYVSLDDSYLSVHKALEHSAMRCNRKLNLVSVDSEHLEPEMQEKDPRKFHEAWAHVVRAQGIIVPGGFGTRGIQGMVDVAKWARERKLPYLGICLGMQTAVIEYARNVMGLKGATSEEFSATAEHRVVIFMPEGSKEQMGGTMRLGSRTSHFKPGTEWSKLRGLYGGVDVVEERHRHRYEVNPDYIEDLEKAGLSLTSMDDQGVRVETIELKDHPFFVGLQAHPEYKSKTLAPAPSLLGLVAASSGCLDEIIEAAHKKQSSSNGVSDVTNF.

Positions 304–559 (NIILVGKYVS…VAASSGCLDE (256 aa)) constitute a Glutamine amidotransferase type-1 domain. Catalysis depends on for GATase activity residues cysteine 403, histidine 532, and glutamate 534.

It belongs to the CTP synthase family.

It catalyses the reaction UTP + L-glutamine + ATP + H2O = CTP + L-glutamate + ADP + phosphate + 2 H(+). Its pathway is pyrimidine metabolism; CTP biosynthesis via de novo pathway; CTP from UDP: step 2/2. Its function is as follows. Catalyzes the ATP-dependent amination of UTP to CTP with either L-glutamine or ammonia as the source of nitrogen. The sequence is that of CTP synthase (URA7) from Gibberella zeae (strain ATCC MYA-4620 / CBS 123657 / FGSC 9075 / NRRL 31084 / PH-1) (Wheat head blight fungus).